Reading from the N-terminus, the 387-residue chain is Putative odorant receptor 19b (387 aa).

The Cytoplasmic segment spans residues 1 to 40 (MDISKVDSTRALVNHWRIFRIMGIHPPGKRTFWGRHYTAY). Residues 41–61 (SMVWNVTFHICIWVSFSVNLL) traverse the membrane as a helical segment. Residues 62–71 (QSNSLETFCE) lie on the Extracellular side of the membrane. Residues 72–92 (SLCVTMPHTLYMLKLINVRRM) traverse the membrane as a helical segment. The Cytoplasmic segment spans residues 93–127 (RGEMISSHWLLRLLDKRLGCADERQIIMAGIERAE). Residues 128–148 (FIFRTIFRGLACTVVLGIIYI) traverse the membrane as a helical segment. The Extracellular portion of the chain corresponds to 149–171 (SASSEPTLMYPTWIPWNWKDSTS). A helical membrane pass occupies residues 172 to 192 (AYLATAMLHTTALMANATLVL). Over 193–254 (NLSSYPGTYL…LRLFKSLERS (62 aa)) the chain is Cytoplasmic. Residues 255 to 275 (LSMTCFLQFFSTACAQCTICY) form a helical membrane-spanning segment. Residues 276 to 285 (FLLFGNVGIM) lie on the Extracellular side of the membrane. The helical transmembrane segment at 286 to 306 (RFMNMLFLLVILTTETLLLCY) threads the bilayer. Topologically, residues 307-336 (TAELPCKEGESLLTAVYSCNWLSQSVNFRR) are cytoplasmic. The chain crosses the membrane as a helical span at residues 337–357 (LLLLMLARCQIPMILVSGVIV). The Extracellular portion of the chain corresponds to 358–387 (PISMKTFTVMIKGAYTMLTLLNEIRKTSLE).

It belongs to the insect chemoreceptor superfamily. Heteromeric odorant receptor channel (TC 1.A.69) family. Or2a subfamily. In terms of assembly, interacts with Orco. Complexes exist early in the endomembrane system in olfactory sensory neurons (OSNs), coupling these complexes to the conserved ciliary trafficking pathway.

Its subcellular location is the cell membrane. Its function is as follows. Odorant receptor which mediates acceptance or avoidance behavior, depending on its substrates. The odorant receptor repertoire encodes a large collection of odor stimuli that vary widely in identity, intensity, and duration. May form a complex with Orco to form odorant-sensing units, providing sensitive and prolonged odorant signaling and calcium permeability. This Drosophila melanogaster (Fruit fly) protein is Putative odorant receptor 19b.